The sequence spans 160 residues: Large ribosomal subunit protein bL19 (160 aa).

The protein belongs to the bacterial ribosomal protein bL19 family.

Its function is as follows. This protein is located at the 30S-50S ribosomal subunit interface and may play a role in the structure and function of the aminoacyl-tRNA binding site. This is Large ribosomal subunit protein bL19 from Prochlorococcus marinus subsp. pastoris (strain CCMP1986 / NIES-2087 / MED4).